Consider the following 669-residue polypeptide: Polyamine deacetylase HDAC10 (669 aa).

The interval 1–323 (MGTALVYHED…VCMTVQTLLG (323 aa)) is histone deacetylase. D20 provides a ligand contact to substrate. Positions 21–24 (PECE) match the Substrate specificity motif. Residue H135 is the Proton donor/acceptor of the active site. Zn(2+) contacts are provided by D172, H174, and D265. Y305 provides a ligand contact to substrate. A compositionally biased stretch (polar residues) spans 361–373 (DVTAVPMSPSSHS). The segment at 361–387 (DVTAVPMSPSSHSPEGRPPPLLPGGPV) is disordered. Phosphoserine is present on S393.

It belongs to the histone deacetylase family. HD type 2 subfamily. Interacts with HDAC3. Interacts with HDAC2 and NCOR2/SMRT. Interacts with HSPA8/HSC70. Interacts with MSH2. In terms of tissue distribution, widely expressed with high levels in liver and kidney.

Its subcellular location is the cytoplasm. The protein localises to the nucleus. The catalysed reaction is N(8)-acetylspermidine + H2O = spermidine + acetate. The enzyme catalyses N-acetylputrescine + H2O = putrescine + acetate. It carries out the reaction N-acetylcadaverine + H2O = cadaverine + acetate. It catalyses the reaction N(6)-acetyl-L-lysyl-[protein] + H2O = L-lysyl-[protein] + acetate. In terms of biological role, polyamine deacetylase (PDAC), which acts preferentially on N(8)-acetylspermidine, and also on acetylcadaverine and acetylputrescine. Exhibits attenuated catalytic activity toward N(1),N(8)-diacetylspermidine and very low activity, if any, toward N(1)-acetylspermidine. Histone deacetylase activity has been observed in vitro. Has also been shown to be involved in MSH2 deacetylation. The physiological relevance of protein/histone deacetylase activity is unclear and could be very weak. May play a role in the promotion of late stages of autophagy, possibly autophagosome-lysosome fusion and/or lysosomal exocytosis in neuroblastoma cells. May play a role in homologous recombination. May promote DNA mismatch repair. The chain is Polyamine deacetylase HDAC10 (HDAC10) from Homo sapiens (Human).